A 125-amino-acid polypeptide reads, in one-letter code: Phosphoribosyl-AMP cyclohydrolase (125 aa).

D74 contributes to the Mg(2+) binding site. Zn(2+) is bound at residue C75. The Mg(2+) site is built by D76 and D78. Positions 92 and 99 each coordinate Zn(2+).

It belongs to the PRA-CH family. As to quaternary structure, homodimer. Mg(2+) is required as a cofactor. It depends on Zn(2+) as a cofactor.

Its subcellular location is the cytoplasm. The catalysed reaction is 1-(5-phospho-beta-D-ribosyl)-5'-AMP + H2O = 1-(5-phospho-beta-D-ribosyl)-5-[(5-phospho-beta-D-ribosylamino)methylideneamino]imidazole-4-carboxamide. Its pathway is amino-acid biosynthesis; L-histidine biosynthesis; L-histidine from 5-phospho-alpha-D-ribose 1-diphosphate: step 3/9. Catalyzes the hydrolysis of the adenine ring of phosphoribosyl-AMP. The chain is Phosphoribosyl-AMP cyclohydrolase from Geobacter metallireducens (strain ATCC 53774 / DSM 7210 / GS-15).